Consider the following 797-residue polypeptide: LPS-assembly protein LptD (797 aa).

Positions 1–30 (MKEGRKRLRAGYCYMLAGVVGVASTGSSRA) are cleaved as a signal peptide.

Belongs to the LptD family. As to quaternary structure, component of the lipopolysaccharide transport and assembly complex. Interacts with LptE and LptA.

It localises to the cell outer membrane. Its function is as follows. Together with LptE, is involved in the assembly of lipopolysaccharide (LPS) at the surface of the outer membrane. This Hahella chejuensis (strain KCTC 2396) protein is LPS-assembly protein LptD.